A 145-amino-acid chain; its full sequence is MYPAHLLVLVAVCVSLLGAANIPPQPLNLIQFKNMIQCAGTRPWTAYVNYGCYCGKGGSGTPVDELDRCCYTHDNCYNEAEKIPGCNPNIKTYSYTCTEPNLTCTDTADTCARFLCDCDRTAAICFASAPYNSNNVMISSSTNCQ.

The N-terminal stretch at 1 to 19 is a signal peptide; that stretch reads MYPAHLLVLVAVCVSLLGA. The propeptide occupies 20–27; sequence ANIPPQPL. Cystine bridges form between Cys38/Cys97, Cys52/Cys144, Cys54/Cys70, Cys69/Cys125, Cys76/Cys118, Cys86/Cys111, and Cys104/Cys116. Positions 53, 55, and 57 each coordinate Ca(2+). His73 is a catalytic residue. Asp74 contributes to the Ca(2+) binding site. Residue Asp119 is part of the active site.

This sequence belongs to the phospholipase A2 family. Group I subfamily. D49 sub-subfamily. As to quaternary structure, monomer. Requires Ca(2+) as cofactor. As to expression, expressed by the venom gland.

It is found in the secreted. It carries out the reaction a 1,2-diacyl-sn-glycero-3-phosphocholine + H2O = a 1-acyl-sn-glycero-3-phosphocholine + a fatty acid + H(+). Snake venom phospholipase A2 (PLA2) that shows anticoagulant and neurotoxic activities. PLA2 catalyzes the calcium-dependent hydrolysis of the 2-acyl groups in 3-sn-phosphoglycerides. This is Basic phospholipase A2 KPA2 from Bungarus caeruleus (Indian krait).